The sequence spans 77 residues: uncharacterized protein (77 aa).

Residues Ser56 to Asp77 are disordered. Over residues Ser65 to Asp77 the composition is skewed to low complexity.

This is an uncharacterized protein from Frog virus 3 (isolate Goorha) (FV-3).